The primary structure comprises 202 residues: Dephospho-CoA kinase (202 aa).

Residues 4–201 form the DPCK domain; it reads VIGLTGGIAS…QKYLAMSKQN (198 aa). Position 12–17 (12–17) interacts with ATP; the sequence is ASGKTT.

The protein belongs to the CoaE family.

It localises to the cytoplasm. It catalyses the reaction 3'-dephospho-CoA + ATP = ADP + CoA + H(+). The protein operates within cofactor biosynthesis; coenzyme A biosynthesis; CoA from (R)-pantothenate: step 5/5. Its function is as follows. Catalyzes the phosphorylation of the 3'-hydroxyl group of dephosphocoenzyme A to form coenzyme A. The polypeptide is Dephospho-CoA kinase (Vibrio vulnificus (strain CMCP6)).